Reading from the N-terminus, the 82-residue chain is Penaeidin-3i (82 aa).

An N-terminal signal peptide occupies residues 1–19; sequence MRLVVCLVFLASFALVCQG. A Pyrrolidone carboxylic acid modification is found at Gln20. 2 disulfides stabilise this stretch: Cys55–Cys73 and Cys67–Cys74. The residue at position 81 (Ser81) is a Serine amide.

The protein belongs to the penaeidin family.

The protein resides in the cytoplasmic granule. Functionally, antibacterial and antifungal activity. Presents chitin-binding activity. This chain is Penaeidin-3i, found in Penaeus vannamei (Whiteleg shrimp).